A 671-amino-acid polypeptide reads, in one-letter code: Putative ubiquitin thioesterase 232R (671 aa).

4 disordered regions span residues E36–S62, S100–Q123, N171–F203, and E250–S319. The segment covering P110 to Q123 has biased composition (low complexity). Over residues R182–R200 the composition is skewed to pro residues. Over residues S255 to K271 the composition is skewed to low complexity. Residues P272–S319 show a composition bias toward basic residues. Residues F392–F521 enclose the OTU domain. D400 is an active-site residue. The Nucleophile role is filled by C403. The active site involves H514. Residues K589 to P625 form a disordered region.

It carries out the reaction Thiol-dependent hydrolysis of ester, thioester, amide, peptide and isopeptide bonds formed by the C-terminal Gly of ubiquitin (a 76-residue protein attached to proteins as an intracellular targeting signal).. Hydrolase that can remove conjugated ubiquitin from proteins and may therefore play an important regulatory role at the level of protein turnover by preventing degradation. The chain is Putative ubiquitin thioesterase 232R from Acheta domesticus (House cricket).